The chain runs to 231 residues: Ribonuclease 3 (231 aa).

One can recognise an RNase III domain in the interval 5–134; that stretch reads QKGIKEDFGI…FIGALYKDQG (130 aa). A Mg(2+)-binding site is contributed by E47. Residue D51 is part of the active site. The Mg(2+) site is built by D120 and E123. Residue E123 is part of the active site. The DRBM domain maps to 160–230; the sequence is DYKSKLQELL…AKKAYQDVTP (71 aa).

It belongs to the ribonuclease III family. In terms of assembly, homodimer. Mg(2+) serves as cofactor.

The protein resides in the cytoplasm. It carries out the reaction Endonucleolytic cleavage to 5'-phosphomonoester.. Digests double-stranded RNA. Involved in the processing of primary rRNA transcript to yield the immediate precursors to the large and small rRNAs (23S and 16S). Processes some mRNAs, and tRNAs when they are encoded in the rRNA operon. Processes pre-crRNA and tracrRNA of type II CRISPR loci if present in the organism. The chain is Ribonuclease 3 from Oenococcus oeni (strain ATCC BAA-331 / PSU-1).